The sequence spans 943 residues: Isoleucine--tRNA ligase (943 aa).

Residues Pro-58–His-68 carry the 'HIGH' region motif. Residue Glu-567 coordinates L-isoleucyl-5'-AMP. The 'KMSKS' region motif lies at Lys-608 to Ser-612. An ATP-binding site is contributed by Lys-611. 4 residues coordinate Zn(2+): Cys-906, Cys-909, Cys-926, and Cys-929.

The protein belongs to the class-I aminoacyl-tRNA synthetase family. IleS type 1 subfamily. Monomer. It depends on Zn(2+) as a cofactor.

The protein resides in the cytoplasm. The catalysed reaction is tRNA(Ile) + L-isoleucine + ATP = L-isoleucyl-tRNA(Ile) + AMP + diphosphate. Functionally, catalyzes the attachment of isoleucine to tRNA(Ile). As IleRS can inadvertently accommodate and process structurally similar amino acids such as valine, to avoid such errors it has two additional distinct tRNA(Ile)-dependent editing activities. One activity is designated as 'pretransfer' editing and involves the hydrolysis of activated Val-AMP. The other activity is designated 'posttransfer' editing and involves deacylation of mischarged Val-tRNA(Ile). In Pseudomonas entomophila (strain L48), this protein is Isoleucine--tRNA ligase.